A 91-amino-acid chain; its full sequence is Small ribosomal subunit protein uS19 (91 aa).

This sequence belongs to the universal ribosomal protein uS19 family.

Protein S19 forms a complex with S13 that binds strongly to the 16S ribosomal RNA. This chain is Small ribosomal subunit protein uS19, found in Shouchella clausii (strain KSM-K16) (Alkalihalobacillus clausii).